The primary structure comprises 211 residues: Small ribosomal subunit protein uS4 (211 aa).

The region spanning 99 to 160 (RRLDSVVYQM…KSRNIQQVRE (62 aa)) is the S4 RNA-binding domain.

This sequence belongs to the universal ribosomal protein uS4 family. In terms of assembly, part of the 30S ribosomal subunit. Contacts protein S5. The interaction surface between S4 and S5 is involved in control of translational fidelity.

Functionally, one of the primary rRNA binding proteins, it binds directly to 16S rRNA where it nucleates assembly of the body of the 30S subunit. In terms of biological role, with S5 and S12 plays an important role in translational accuracy. The protein is Small ribosomal subunit protein uS4 of Petrotoga mobilis (strain DSM 10674 / SJ95).